The primary structure comprises 310 residues: MMSNNMPRHFLDLTELPTSELRNMLSAAVAMKAKRKANADGEKPLAGKTLAMIFDKPSTRTRVSFDVGMRQLGGESIMLTGAEMQLGRGETIADTARVLSRFVDIIMIRILNHEALLELAANATVPVINGLTRKSHPCQVMADVMTFEEHRGPIKGRTIAWTGDDNNVLASFAHAAQRFEFKLNIATPPQLSPSKALRDWIKASGAAITIGTDPEEAVRGADCVVTDTWVSMGDKDGEHRHNLLKPYQVNAKLMSLAHKDAIFMHCLPAHRGEEVTDEVIDGPQSVVFDEAENRLHAQKGILAWCLGAVA.

Carbamoyl phosphate is bound by residues 58-61 (STRT), Gln85, Arg109, and 136-139 (HPCQ). Residues Asn167, Asp227, and 231–232 (SM) each bind L-ornithine. Carbamoyl phosphate contacts are provided by residues 266-267 (CL) and Arg294.

Belongs to the aspartate/ornithine carbamoyltransferase superfamily. OTCase family.

The protein localises to the cytoplasm. It carries out the reaction carbamoyl phosphate + L-ornithine = L-citrulline + phosphate + H(+). It participates in amino-acid biosynthesis; L-arginine biosynthesis; L-arginine from L-ornithine and carbamoyl phosphate: step 1/3. In terms of biological role, reversibly catalyzes the transfer of the carbamoyl group from carbamoyl phosphate (CP) to the N(epsilon) atom of ornithine (ORN) to produce L-citrulline. The chain is Ornithine carbamoyltransferase from Rhodopseudomonas palustris (strain ATCC BAA-98 / CGA009).